Here is a 1839-residue protein sequence, read N- to C-terminus: Mannuronan C5-epimerase AlgE3 (1839 aa).

PbH1 repeat units lie at residues 133–155 (DRDV…DPHE), 157–179 (TINL…VADY), 180–202 (QVGG…NIVT), 204–226 (TNDF…VVQR), 257–279 (THDV…RVYG), 280–302 (AQDV…YAEV), 320–342 (TTGT…GIQE), and 347–369 (TDYS…RLYG). Polar residues predominate over residues 372-386 (STVSEQPSSGQQATL). The disordered stretch occupies residues 372-392 (STVSEQPSSGQQATLEGTAGN). 9 Hemolysin-type calcium-binding repeats span residues 387 to 399 (EGTA…SGTG), 406 to 422 (GLAG…DDTL), 424 to 440 (GGAG…ADTF), 538 to 550 (TGTE…SGTD), 557 to 573 (GYGG…NDIL), 574 to 591 (VGGA…ADVF), 695 to 709 (EGTD…TGAD), 714 to 730 (GLGG…DDVL), and 732 to 748 (GGAE…ADTF). 8 PbH1 repeats span residues 975-997 (DRNV…DPHE), 999-1021 (TINL…VADY), 1022-1044 (LVDS…NVVT), 1046-1068 (TYDF…VIQR), 1099-1121 (TNNI…RLYG), 1122-1143 (TEDV…AYAE), 1161-1183 (TTGT…GIEE), and 1188-1210 (TDYS…RLNG). A compositionally biased stretch (polar residues) spans 1215–1236 (VSDQPGTGQQATLEGTTGNDTL). Positions 1215 to 1238 (VSDQPGTGQQATLEGTTGNDTLGG) are disordered. Hemolysin-type calcium-binding repeat units lie at residues 1229-1243 (GTTG…DAHE), 1247-1263 (GLDG…NDIL), 1265-1281 (GGVG…ADTF), 1398-1414 (GHAG…DDIL), 1415-1432 (VGGA…ADVF), 1536-1552 (EGTA…ADEV), 1554-1571 (HGGS…ADVF), 1670-1681 (GGDGNDTLSGGS), 1688-1704 (GGAG…NDIL), and 1706-1722 (GGAG…SDIF).

It belongs to the D-mannuronate C5-epimerase family. Requires Ca(2+) as cofactor.

The protein resides in the secreted. The enzyme catalyses [(1-&gt;4)-beta-D-mannuronosyl](n) = [alginate](n). It participates in glycan biosynthesis; alginate biosynthesis. Its activity is regulated as follows. Inhibited by zinc. Converts beta-D-mannuronic acid (M) to alpha-L-guluronic acid (G), producing a polymer with gel-forming capacity, required for the formation of the cyst coat. The polypeptide is Mannuronan C5-epimerase AlgE3 (Azotobacter vinelandii).